Here is a 354-residue protein sequence, read N- to C-terminus: Guanine nucleotide-binding protein G(i) subunit alpha-1 (354 aa).

Residue G2 is the site of N-myristoyl glycine attachment. C3 carries the S-palmitoyl cysteine lipid modification. In terms of domain architecture, G-alpha spans 32-354 (REVKLLLLGA…KNNLKDCGLF (323 aa)). Residues 35–48 (KLLLLGAGESGKST) are G1 motif. GTP-binding positions include 43–48 (ESGKST), 150–151 (DS), and 175–178 (LRTR). S47 is a Mg(2+) binding site. A G2 motif region spans residues 173–181 (DVLRTRVKT). T181 provides a ligand contact to Mg(2+). The tract at residues 196 to 205 (FKMFDVGGQR) is G3 motif. GTP-binding positions include 200 to 204 (DVGGQ), 269 to 272 (NKKD), and A326. The segment at 265-272 (ILFLNKKD) is G4 motif. Positions 324 to 329 (TCATDT) are G5 motif.

It belongs to the G-alpha family. G(i/o/t/z) subfamily. In terms of assembly, heterotrimeric G proteins are composed of 3 units; alpha, beta and gamma. The alpha chain contains the guanine nucleotide binding site. Part of a spindle orientation complex at least composed of GNAI1, GPSM2 and NUMA1. Identified in complex with the beta subunit GNB1 and the gamma subunit GNG1. Identified in complex with the beta subunit GNB1 and the gamma subunit GNG2. Component of the TAS2R14-GNAI1 complex, consisting of TAS2R14, GNAI1, GNB1 and GNG2; within the complex interacts with TAS2R14; this complex plays a role in the perception of bitterness. GTP binding causes dissociation of the heterotrimer, liberating the individual subunits so that they can interact with downstream effector proteins. Interacts (GDP-bound form) with GPSM1; this inhibits guanine nucleotide exchange and GTP binding. Interacts (GDP-bound form) with GPSM2 (via GoLoco domains); this inhibits guanine nucleotide exchange. Interacts with RGS10; this strongly enhances GTP hydrolysis. Interacts with RGS1 and RGS16; this strongly enhances GTPase activity. Interacts with RGS4. Interacts with RGS12. Interacts (via active GTP- or inactive GDP-bound forms) with RGS14 (via RGS and GoLoco domains). Interacts with RGS3, RGS6, RGS7, RGS8, RGS17, RGS18 and RGS20 (in vitro). Interacts (GDP-bound form) with RIC8A (via C-terminus); promoting GNAI1 folding and association with the plasma membrane. Interacts (inactive GDP-bound form) with NUCB1 (via GBA motif); the interaction leads to activation of GNAI1. Interacts (inactive GDP-bound form) with CCDC88C/DAPLE (via GBA motif); the interaction leads to activation of GNAI1. Interacts (inactive GDP-bound form) with CCDC8A/GIV (via GBA motif). Interacts with GPR15. Myristoylation at Gly-2 is required for membrane anchoring before palmitoylation. In terms of processing, palmitoylation at Cys-3 varies with membrane lipid composition.

Its subcellular location is the nucleus. It localises to the cytoplasm. It is found in the cell membrane. The protein resides in the cytoskeleton. The protein localises to the microtubule organizing center. Its subcellular location is the centrosome. It localises to the cell cortex. It is found in the membrane. Guanine nucleotide-binding proteins (G proteins) function as transducers downstream of G protein-coupled receptors (GPCRs) in numerous signaling cascades. The alpha chain contains the guanine nucleotide binding site and alternates between an active, GTP-bound state and an inactive, GDP-bound state. Signaling by an activated GPCR promotes GDP release and GTP binding. The alpha subunit has a low GTPase activity that converts bound GTP to GDP, thereby terminating the signal. Both GDP release and GTP hydrolysis are modulated by numerous regulatory proteins. Signaling is mediated via effector proteins, such as adenylate cyclase. Inhibits adenylate cyclase activity of ADCY1, ADCY5 and ADCY6, leading to decreased intracellular cAMP levels. The inactive GDP-bound form prevents the association of RGS14 with centrosomes and is required for the translocation of RGS14 from the cytoplasm to the plasma membrane. Required for normal cytokinesis during mitosis. Required for cortical dynein-dynactin complex recruitment during metaphase. The polypeptide is Guanine nucleotide-binding protein G(i) subunit alpha-1 (GNAI1) (Pongo abelii (Sumatran orangutan)).